A 102-amino-acid polypeptide reads, in one-letter code: Small ribosomal subunit protein bS6 (102 aa).

This sequence belongs to the bacterial ribosomal protein bS6 family.

Binds together with bS18 to 16S ribosomal RNA. The chain is Small ribosomal subunit protein bS6 (rpsF) from Deinococcus radiodurans (strain ATCC 13939 / DSM 20539 / JCM 16871 / CCUG 27074 / LMG 4051 / NBRC 15346 / NCIMB 9279 / VKM B-1422 / R1).